The chain runs to 1383 residues: DNA-directed RNA polymerase subunit beta (1383 aa).

It belongs to the RNA polymerase beta chain family. The RNAP catalytic core consists of 2 alpha, 1 beta, 1 beta' and 1 omega subunit. When a sigma factor is associated with the core the holoenzyme is formed, which can initiate transcription.

It carries out the reaction RNA(n) + a ribonucleoside 5'-triphosphate = RNA(n+1) + diphosphate. DNA-dependent RNA polymerase catalyzes the transcription of DNA into RNA using the four ribonucleoside triphosphates as substrates. In Xanthomonas euvesicatoria pv. vesicatoria (strain 85-10) (Xanthomonas campestris pv. vesicatoria), this protein is DNA-directed RNA polymerase subunit beta.